The following is a 180-amino-acid chain: Phosphoribosylaminoimidazole carboxylase (180 aa).

Residues S35, D38, S62, K65, G89, and S91 each coordinate substrate.

This sequence belongs to the AIR carboxylase family. Class II subfamily.

The enzyme catalyses 5-amino-1-(5-phospho-D-ribosyl)imidazole-4-carboxylate + H(+) = 5-amino-1-(5-phospho-beta-D-ribosyl)imidazole + CO2. It functions in the pathway purine metabolism; IMP biosynthesis via de novo pathway; 5-amino-1-(5-phospho-D-ribosyl)imidazole-4-carboxylate from 5-amino-1-(5-phospho-D-ribosyl)imidazole (carboxylase route): step 1/1. Catalyzes the reversible conversion of 5-aminoimidazole ribonucleotide (AIR) and CO(2) to 4-carboxy-5-aminoimidazole ribonucleotide (CAIR). The sequence is that of Phosphoribosylaminoimidazole carboxylase from Archaeoglobus fulgidus (strain ATCC 49558 / DSM 4304 / JCM 9628 / NBRC 100126 / VC-16).